A 469-amino-acid chain; its full sequence is Putative dipeptidase SAR1836 (469 aa).

Residue His84 participates in Zn(2+) binding. Residue Asp86 is part of the active site. Asp115 contributes to the Zn(2+) binding site. Glu149 functions as the Proton acceptor in the catalytic mechanism. Zn(2+) is bound by residues Glu150, Asp173, and His440.

Belongs to the peptidase M20A family. Zn(2+) is required as a cofactor.

In Staphylococcus aureus (strain MRSA252), this protein is Putative dipeptidase SAR1836.